Reading from the N-terminus, the 154-residue chain is Large ribosomal subunit protein uL30 (154 aa).

Belongs to the universal ribosomal protein uL30 family. Part of the 50S ribosomal subunit.

In Methanococcus maripaludis (strain C5 / ATCC BAA-1333), this protein is Large ribosomal subunit protein uL30.